Consider the following 315-residue polypeptide: tRNA uridine(34) hydroxylase (315 aa).

The Rhodanese domain occupies 145 to 235 (MKNDFILVDM…GIIEYVNFIK (91 aa)). The active-site Cysteine persulfide intermediate is cysteine 199.

It belongs to the TrhO family.

The enzyme catalyses uridine(34) in tRNA + AH2 + O2 = 5-hydroxyuridine(34) in tRNA + A + H2O. In terms of biological role, catalyzes oxygen-dependent 5-hydroxyuridine (ho5U) modification at position 34 in tRNAs. This chain is tRNA uridine(34) hydroxylase, found in Wigglesworthia glossinidia brevipalpis.